The primary structure comprises 239 residues: MLAGLVPAPDHGMREEILGDRSRLIRQRGEHALIGISAGNSYFSQKNTVMLLQWAGQRFERTDVVYVDTHIDEMLIADGRSAQEAERSVKRTLKDLRRRLRRSLESVGDHAERFRVRSLSELQETPEYRAVRERTDRAFEEDAEFATACEDMVRAVVMNRPGDGVGISAEHLRAGLNYVLAEAPLFADSPGVFSVPSSVLCYHIDTPITAFLSRRETGFRAAEGQAYVVVRPQELADAA.

Ser-37 acts as the Nucleophile in catalysis. Residues Asn-40, 178 to 182 (YVLAE), and Tyr-202 contribute to the substrate site.

The protein belongs to the CDPS family. As to quaternary structure, monomer.

The enzyme catalyses L-phenylalanyl-tRNA(Phe) + L-leucyl-tRNA(Leu) = cyclo(L-phenylalanyl-L-leucyl) + tRNA(Phe) + tRNA(Leu) + H(+). Involved in the biosynthesis of albonoursin (cyclo[(alpha,beta-dehydro-Phe)-(alpha,beta-dehydro-Leu)]), an antibacterial peptide. It uses activated amino acids in the form of aminoacyl-tRNAs (aa-tRNAs) as substrates to catalyze the ATP-independent formation of cyclodipeptides which are intermediates in diketopiperazine (DKP) biosynthetic pathways. Catalyzes the formation of cyclo(L-Phe-L-Leu) (cFL) as major products from L-L-phenylalanyl-tRNA(Phe) and L-leucyl-tRNA(Leu). AlbC can also incorporate various nonpolar residues, such as L-phenylalanine, L-leucine, L-tyrosine and L-methionine, and to a much lesser extent L-alanine and L-valine, into cyclodipeptides. Indeed, ten possible cyclodipeptides composed of L-phenylalanine, L-leucine, L-tyrosine and L-methionine are all synthesized to detectable amounts by AlbC. The sequence is that of Cyclo(L-leucyl-L-phenylalanyl) synthase (albC) from Streptomyces noursei (Streptomyces albulus).